Consider the following 152-residue polypeptide: Regulatory protein RecX (152 aa).

Belongs to the RecX family.

Its subcellular location is the cytoplasm. In terms of biological role, modulates RecA activity. The protein is Regulatory protein RecX of Chromohalobacter salexigens (strain ATCC BAA-138 / DSM 3043 / CIP 106854 / NCIMB 13768 / 1H11).